Here is a 331-residue protein sequence, read N- to C-terminus: Probable cytosolic iron-sulfur protein assembly protein Ciao1 (331 aa).

WD repeat units follow at residues 12 to 51 (GHKG…WTTK), 57 to 96 (GHKR…ATLE), 97 to 136 (GHEN…EFEC), 142 to 181 (AHSQ…SDWD), 188 to 227 (SHTS…NEAG), 246 to 285 (LHTR…KRDA), and 297 to 331 (AHEQ…KLQE).

Belongs to the WD repeat CIA1 family.

Its function is as follows. Essential component of the cytosolic iron-sulfur (Fe/S) protein assembly machinery. Required for the maturation of extramitochondrial Fe/S proteins. The sequence is that of Probable cytosolic iron-sulfur protein assembly protein Ciao1 from Drosophila mojavensis (Fruit fly).